The chain runs to 31 residues: Photosystem I reaction center subunit XII (31 aa).

Residues 7–26 (QIYIALLTALIPAFFALKLG) traverse the membrane as a helical segment.

This sequence belongs to the PsaM family.

It localises to the plastid. It is found in the chloroplast thylakoid membrane. This Euglena mutabilis protein is Photosystem I reaction center subunit XII.